The primary structure comprises 291 residues: 3-hydroxy-5-phosphonooxypentane-2,4-dione thiolase (291 aa).

The active-site Schiff-base intermediate with substrate is Lys203.

This sequence belongs to the DeoC/FbaB aldolase family. As to quaternary structure, homodecamer.

The protein localises to the cytoplasm. It carries out the reaction dihydroxyacetone phosphate + acetyl-CoA = 3-hydroxy-2,4-dioxopentyl phosphate + CoA. In terms of biological role, involved in the degradation of phospho-AI-2, thereby terminating induction of the lsr operon and closing the AI-2 signaling cycle. Catalyzes the transfer of an acetyl moiety from 3-hydroxy-5-phosphonooxypentane-2,4-dione to CoA to form glycerone phosphate and acetyl-CoA. This Escherichia coli O139:H28 (strain E24377A / ETEC) protein is 3-hydroxy-5-phosphonooxypentane-2,4-dione thiolase.